The chain runs to 121 residues: MSISQDDILNAVAEMSVLQVVELIKAFEEKFGVSAAAASAGPAVAAVAAEEQTEFNVMLLEAGEKKVNVIKAVRELTGLGLKEAKAVVDGAPAQVLEAVSKDAADKAKAVLEEAGAKVELK.

Belongs to the bacterial ribosomal protein bL12 family. In terms of assembly, homodimer. Part of the ribosomal stalk of the 50S ribosomal subunit. Forms a multimeric L10(L12)X complex, where L10 forms an elongated spine to which 2 to 4 L12 dimers bind in a sequential fashion. Binds GTP-bound translation factors.

Its function is as follows. Forms part of the ribosomal stalk which helps the ribosome interact with GTP-bound translation factors. Is thus essential for accurate translation. This is Large ribosomal subunit protein bL12 from Pseudomonas fluorescens (strain SBW25).